Consider the following 246-residue polypeptide: 1-(5-phosphoribosyl)-5-[(5-phosphoribosylamino)methylideneamino] imidazole-4-carboxamide isomerase (246 aa).

Asp-7 functions as the Proton acceptor in the catalytic mechanism. The active-site Proton donor is the Asp-129.

The protein belongs to the HisA/HisF family.

It localises to the cytoplasm. It catalyses the reaction 1-(5-phospho-beta-D-ribosyl)-5-[(5-phospho-beta-D-ribosylamino)methylideneamino]imidazole-4-carboxamide = 5-[(5-phospho-1-deoxy-D-ribulos-1-ylimino)methylamino]-1-(5-phospho-beta-D-ribosyl)imidazole-4-carboxamide. It participates in amino-acid biosynthesis; L-histidine biosynthesis; L-histidine from 5-phospho-alpha-D-ribose 1-diphosphate: step 4/9. The chain is 1-(5-phosphoribosyl)-5-[(5-phosphoribosylamino)methylideneamino] imidazole-4-carboxamide isomerase from Shewanella sediminis (strain HAW-EB3).